Here is a 247-residue protein sequence, read N- to C-terminus: Adenosylcobinamide-GDP ribazoletransferase (247 aa).

5 consecutive transmembrane segments (helical) span residues 34–54 (IITF…VFMV), 57–77 (AWCG…LMTG), 113–133 (GGLA…ELAL), 138–158 (ILAS…LLMY), and 194–214 (VLLL…AIFI).

It belongs to the CobS family. The cofactor is Mg(2+).

Its subcellular location is the cell inner membrane. The catalysed reaction is alpha-ribazole + adenosylcob(III)inamide-GDP = adenosylcob(III)alamin + GMP + H(+). It catalyses the reaction alpha-ribazole 5'-phosphate + adenosylcob(III)inamide-GDP = adenosylcob(III)alamin 5'-phosphate + GMP + H(+). Its pathway is cofactor biosynthesis; adenosylcobalamin biosynthesis; adenosylcobalamin from cob(II)yrinate a,c-diamide: step 7/7. Its function is as follows. Joins adenosylcobinamide-GDP and alpha-ribazole to generate adenosylcobalamin (Ado-cobalamin). Also synthesizes adenosylcobalamin 5'-phosphate from adenosylcobinamide-GDP and alpha-ribazole 5'-phosphate. This Shigella flexneri serotype 5b (strain 8401) protein is Adenosylcobinamide-GDP ribazoletransferase.